We begin with the raw amino-acid sequence, 607 residues long: Chaperone protein dnaK (607 aa).

A compositionally biased stretch (polar residues) spans 579–591; that stretch reads KASETSNAKTNGK. Residues 579–607 are disordered; it reads KASETSNAKTNGKASEKEDVIDADFKAQE. Residues 592–607 show a composition bias toward basic and acidic residues; sequence ASEKEDVIDADFKAQE.

This sequence belongs to the heat shock protein 70 family.

The protein resides in the plastid. It localises to the chloroplast. Acts as a chaperone. The chain is Chaperone protein dnaK from Cyanidioschyzon merolae (strain NIES-3377 / 10D) (Unicellular red alga).